The sequence spans 294 residues: Indole-3-glycerol phosphate synthase (294 aa).

Belongs to the TrpC family.

The catalysed reaction is 1-(2-carboxyphenylamino)-1-deoxy-D-ribulose 5-phosphate + H(+) = (1S,2R)-1-C-(indol-3-yl)glycerol 3-phosphate + CO2 + H2O. It participates in amino-acid biosynthesis; L-tryptophan biosynthesis; L-tryptophan from chorismate: step 4/5. The chain is Indole-3-glycerol phosphate synthase from Parasynechococcus marenigrum (strain WH8102).